We begin with the raw amino-acid sequence, 643 residues long: MLLPCHWVLDATFSDGSLGQWVKNTCATYALSPVVLPPQPQPRKKATDKDYSAFHLGHLREVRLFLRGGTSDQRMDSLVLCPTYFKLWRTLSGSPGLQLSDLHFGSQPEGKFSLRRAVSVKQREEPQDWPLNEKRTLWKDSDLPTWRRGTGYTLSLPAVSPGKRLWGEKAGSLPESEPLFTYTLDEKVDKLVQFLLLKYQAKEPLTRAEMQMNVINTYTGYFPMIFRKAREFIEILFGISLTEVDPDHFYVFVNTLDLTCEGSLSDEQGMPQNRLLILILSVIFIKGNCASEEVIWEVLNAIGPWSALAGFADVLSRLALWESEGPEAFCEESGLRSAEGSVLDLANPQGLAGHRQEDGRRGLTEASPQQKKGGEDEDMPAAGMPPLPQSPPEIPPQGPPKISPQGPPQSPPQSPLDSCSSPLLWTRLDEESSSEEEDTATWHALPESESLPRYALDEKVAELVQFLLLKYQTKEPVTKAEMLTTVIKKYKDYFPMIFGKAHEFIELIFGIALTDMDPDNHSYFFEDTLDLTYEGSLIDDQGMPKNCLLILILSMIFIKGSCVPEEVIWEVLSAIGPIQRPAREVLEFLSKLSSIIPSAFPSWYMDALKDMEDRAQAIIDTTDDATAMASASPSVMSTNFCPE.

MAGE domains lie at 184 to 384 (LDEK…AAGM) and 456 to 643 (LDEK…FCPE). The tract at residues 347–421 (NPQGLAGHRQ…PQSPLDSCSS (75 aa)) is disordered. Basic and acidic residues predominate over residues 354-363 (HRQEDGRRGL). The segment covering 383-414 (GMPPLPQSPPEIPPQGPPKISPQGPPQSPPQS) has biased composition (pro residues). Phosphothreonine occurs at positions 478, 484, and 485.

Expressed in testis. Not expressed in other normal tissues, but is expressed in tumors of different histological origins.

The sequence is that of Melanoma-associated antigen C3 (MAGEC3) from Homo sapiens (Human).